Consider the following 1114-residue polypeptide: Translation initiation factor IF-2 (1114 aa).

Disordered stretches follow at residues 69–102 (SIKKDNFKQNKSPSISSKKETPLKDNSNKKPLLI) and 181–507 (INNN…KRRA). The segment covering 85-96 (SKKETPLKDNSN) has biased composition (basic and acidic residues). The segment covering 181–198 (INNNVKSNESSQNISSAG) has biased composition (polar residues). Positions 240–251 (INPNKQNNKQNI) are enriched in low complexity. The segment covering 252 to 261 (AFKQTGSNRI) has biased composition (polar residues). 3 stretches are compositionally biased toward low complexity: residues 262 to 278 (GSPNRPGMPNNRPGLRN), 290 to 309 (NRQGNPNRPGMPNNRPGLRN), and 321 to 337 (NRQGNPNRPGMPNNRPG). Basic and acidic residues predominate over residues 365-375 (NSEKDNKDKNN). The segment covering 376-385 (NAKQNINGPN) has biased composition (low complexity). Basic and acidic residues predominate over residues 417–431 (GKTDWDDSAKLEALR). Residues 489–505 (KQFKKKKKETTRQRQKR) show a composition bias toward basic residues. Residues 606–778 (RRPPVITVMG…ILLVSEVEDL (173 aa)) form the tr-type G domain. A G1 region spans residues 615 to 622 (GHVDHGKT). A GTP-binding site is contributed by 615 to 622 (GHVDHGKT). The interval 640–644 (GITQH) is G2. The tract at residues 665–668 (DTPG) is G3. GTP-binding positions include 665-669 (DTPGH) and 719-722 (NKID). The segment at 719 to 722 (NKID) is G4. A G5 region spans residues 755–757 (SAI).

Belongs to the TRAFAC class translation factor GTPase superfamily. Classic translation factor GTPase family. IF-2 subfamily.

The protein resides in the cytoplasm. In terms of biological role, one of the essential components for the initiation of protein synthesis. Protects formylmethionyl-tRNA from spontaneous hydrolysis and promotes its binding to the 30S ribosomal subunits. Also involved in the hydrolysis of GTP during the formation of the 70S ribosomal complex. The sequence is that of Translation initiation factor IF-2 from Prochlorococcus marinus (strain MIT 9301).